A 112-amino-acid chain; its full sequence is Transcriptional regulator WhiD (112 aa).

The 4Fe-4S Wbl-type domain maps to A22 to E86. Positions 23, 53, 56, and 62 each coordinate [4Fe-4S] cluster.

This sequence belongs to the WhiB family. In terms of assembly, the 4Fe-4S form is a monomer; upon oxidation forms a disulfide-bonded homodimer. It depends on [4Fe-4S] cluster as a cofactor. In terms of processing, can be nitrosylated by NO, 8 NO react per cluster. These complexes are quite stable under anaerobic conditions, but degrade slowly aerobically. Post-translationally, upon Fe-S cluster removal intramolecular disulfide bonds are formed.

The protein resides in the cytoplasm. In terms of biological role, acts as a transcriptional regulator. Probably redox-responsive. The apo- but not holo-form probably binds DNA. Plays a positive role in prespore maturation and the initiation of sporulation septation. The protein is Transcriptional regulator WhiD (whiD) of Streptomyces coelicolor (strain ATCC BAA-471 / A3(2) / M145).